Here is a 578-residue protein sequence, read N- to C-terminus: Kelch repeat-containing protein kel-10 (578 aa).

In terms of domain architecture, BTB spans 51–118 (PTVTLVLRNN…PKAFEQGIKP (68 aa)). Residues 158–236 (IKIFRLALLY…NSPLQSDRMA (79 aa)) enclose the BACK domain. Kelch repeat units lie at residues 265–315 (AIVC…VVED), 316–362 (KLIV…RIND), 368–414 (LIFA…TIDN), 416–462 (IVVI…SIMN), 464–510 (VCMI…QMDT), and 512–558 (SIYV…TLSD).

This Caenorhabditis elegans protein is Kelch repeat-containing protein kel-10.